The chain runs to 623 residues: Chaperone protein DnaK (623 aa).

A Phosphothreonine; by autocatalysis modification is found at Thr175. Residues Ala578 to Lys623 form a disordered region. Over residues Asn591 to Gly604 the composition is skewed to low complexity. The segment covering Asn605–Lys623 has biased composition (basic and acidic residues).

This sequence belongs to the heat shock protein 70 family.

Acts as a chaperone. The chain is Chaperone protein DnaK from Clostridium botulinum (strain 657 / Type Ba4).